Reading from the N-terminus, the 202-residue chain is Cytochrome c oxidase assembly protein CtaG (202 aa).

At 1–14 (MTSPANPSEVTRDR) the chain is on the cytoplasmic side. A helical; Signal-anchor for type II membrane protein transmembrane segment spans residues 15–37 (RNRGVAFVCAGVFVAMVGMSFAA). The Periplasmic portion of the chain corresponds to 38–202 (VPLYRLFCQV…GAAKTQKLGG (165 aa)).

The protein belongs to the COX11/CtaG family.

Its subcellular location is the cell inner membrane. Exerts its effect at some terminal stage of cytochrome c oxidase synthesis, probably by being involved in the insertion of the copper B into subunit I. The polypeptide is Cytochrome c oxidase assembly protein CtaG (Chelativorans sp. (strain BNC1)).